The chain runs to 339 residues: Methionine import ATP-binding protein MetN 2 (339 aa).

The ABC transporter domain maps to 2–241 (ISFNNVSKVY…PKTKTTQNFV (240 aa)). ATP is bound at residue 38–45 (GFSGAGKS).

It belongs to the ABC transporter superfamily. Methionine importer (TC 3.A.1.24) family. In terms of assembly, the complex is composed of two ATP-binding proteins (MetN), two transmembrane proteins (MetI) and a solute-binding protein (MetQ).

It is found in the cell membrane. It carries out the reaction L-methionine(out) + ATP + H2O = L-methionine(in) + ADP + phosphate + H(+). It catalyses the reaction D-methionine(out) + ATP + H2O = D-methionine(in) + ADP + phosphate + H(+). Its function is as follows. Part of the ABC transporter complex MetNIQ involved in methionine import. Responsible for energy coupling to the transport system. The polypeptide is Methionine import ATP-binding protein MetN 2 (Bacillus cereus (strain ZK / E33L)).